A 668-amino-acid chain; its full sequence is Cyclin-dependent kinase 11.2 (668 aa).

The disordered stretch occupies residues 1 to 265 (MSNYSTNGSR…EQWESMTENE (265 aa)). 3 stretches are compositionally biased toward basic and acidic residues: residues 35–73 (KTKEERYRDKEKERDHERHHDRERRDDRYRKVDSRDHRD), 85–127 (YCRD…DSLR), and 140–163 (LPDDGKLFDRILDPNYKKKEKTVM). Positions 164 to 181 (EVEDVEMSPVEMLDEEEV) are enriched in acidic residues. Basic and acidic residues-rich tracts occupy residues 197 to 212 (NEPEEKDYKSEGDPES) and 245 to 265 (PDDKYGKTPDKEQWESMTENE). In terms of domain architecture, Protein kinase spans 304-600 (YVILNVIAEG…ASEALQHDWF (297 aa)). Residues 310–318 (IAEGTYGEV) and Lys-333 contribute to the ATP site. Asp-432 functions as the Proton acceptor in the catalytic mechanism.

This sequence belongs to the protein kinase superfamily. CMGC Ser/Thr protein kinase family. CDC2/CDKX subfamily. As to expression, expressed in somatic cells and at varying levels throughout the germline (at protein level). Highly expressed in the germ line of hermaphrodites (at protein level).

The protein resides in the nucleus. It localises to the cytoplasm. The catalysed reaction is L-seryl-[protein] + ATP = O-phospho-L-seryl-[protein] + ADP + H(+). It carries out the reaction L-threonyl-[protein] + ATP = O-phospho-L-threonyl-[protein] + ADP + H(+). Its function is as follows. Probable cyclin-dependent kinase whose activity is most likely regulated by the cyclin cyl-1/Cylin-L. Acts partially redundantly with cdk-11.1 to ensure embryonic viability. In contrast to cdk-11.1, not essential for male and female fertility. This Caenorhabditis elegans protein is Cyclin-dependent kinase 11.2.